The chain runs to 155 residues: S-ribosylhomocysteine lyase (155 aa).

Fe cation-binding residues include H57, H61, and C124.

This sequence belongs to the LuxS family. As to quaternary structure, homodimer. It depends on Fe cation as a cofactor.

The enzyme catalyses S-(5-deoxy-D-ribos-5-yl)-L-homocysteine = (S)-4,5-dihydroxypentane-2,3-dione + L-homocysteine. Its function is as follows. Involved in the synthesis of autoinducer 2 (AI-2) which is secreted by bacteria and is used to communicate both the cell density and the metabolic potential of the environment. The regulation of gene expression in response to changes in cell density is called quorum sensing. Catalyzes the transformation of S-ribosylhomocysteine (RHC) to homocysteine (HC) and 4,5-dihydroxy-2,3-pentadione (DPD). The chain is S-ribosylhomocysteine lyase from Listeria monocytogenes serovar 1/2a (strain ATCC BAA-679 / EGD-e).